Here is a 1410-residue protein sequence, read N- to C-terminus: MKDLLKFLKQQSKTEEFNGIKIGLASPDLIRSWSFGEVKKPETINYRTFKPEREGLFCARIFGPVKDYECLCGKYKRLKHRGVICEKCGVEVTQTKVRRERMGHIDLASPVAHIWFLKSLPSRIGLMLDMTLRDIERVLYFESFVVIEPGMTTLERGQMLTEETYLDALEEYGDEFEAKMGAEAVLELLRAINLEEQIEQMREELPSINSETRRKKVTKRLKLMEAFFTSGNKPEWMILKVLPVLPPDLRPLVPLDGGRFATSDLNDLYRRVINRNNRLKRLLDLAAPDIIVRNEKRMLQESVDALLDNGRRGRAITGSNKRPLKSLADMIKGKQGRFRQNLLGKRVDYSGRSVITVGPTLRLHQCGLPKKMALELFKPFIYGKLEGRGLATTIKAAKKMVEREQAEVWDVLDEVIREHPVMLNRAPTLHRLGIQAFEPVLIEGKAIQLHPLVCAAYNADFDGDQMAVHVPLTLEAQLEARALMMSTNNILSPANGEPVITPSQDVVLGLYYTSRERINGRGEGMVFADVSEVEKAYATGVAEIHARVKVRITETSIDADGEKTKATRIVDTTIGRALLSLILPEGLSYDLVNQNMGKKQISKLLNTCYRQLGLKDTVIFADQLMYTGFRFATISGASVGIDDMVIPDEKYTLVADAEAEVLEIQEQFQSGLVTAGERYNKVIDIWASANEKVSKAMMENLSVETVINRDGVEEKQASFNSIYMMADSGARGSAAQIRQLAGMRGLMAKPDGSIIETPITANFREGLNVLQYFISTHGARKGLADTALKTANSGYLTRRLVDVAQDLVVIEDDCGAEHGLTMKPLIEGGDVVEPLRERVLGRVVAIDVIKPGSEEILAPRNTLLDEAWCDILEEHSVDEVIVRSVITCETDFGVCAACYGRDLARGHIINHGEAIGVVAAQSIGEPGTQLTMRTFHIGGAASRASAENNVQVKNAGSLKLHNAKHVSNIDGKLVIVSRSSELAIIDELGREKERYKVPYGTVLEKLEDSEVTAGEIIANWDPHTHPIISEVAGSVKFVDMIDGVTMTRQTDELTGLSSVVVLDVGARTSAGKELRPAIRLVGADGNDLMIPGTDVPAQYFLPGNAIVAKDDNAKINVGDALARIPQESSKTRDITGGLPRVADLFEARKPKEPAILAEISGTISFGKETKGKRRLVITPADGSEHYEEMIPKWRNLNVFEGEKVERGEVIADGPEAAHDILRLRGIHNVANYIVNEVQDVYRLQGVKINDKHIEVIIRQMLRKCLITSAGDTEFLEGEQAEVARVKIANRELIAQGKTPATFERELLGITKASLATESFISAASFQETTRVLTEAAVGGKSDQLRGLKENVIVGRLIPAGTGYAYHKKRNALRATEDAKKAAAKIAPAVTTASEAEQNLADLLNLAGGEE.

Positions 70, 72, 85, and 88 each coordinate Zn(2+). Positions 460, 462, and 464 each coordinate Mg(2+). Zn(2+) is bound by residues C814, C888, C895, and C898.

The protein belongs to the RNA polymerase beta' chain family. As to quaternary structure, the RNAP catalytic core consists of 2 alpha, 1 beta, 1 beta' and 1 omega subunit. When a sigma factor is associated with the core the holoenzyme is formed, which can initiate transcription. It depends on Mg(2+) as a cofactor. Zn(2+) serves as cofactor.

The enzyme catalyses RNA(n) + a ribonucleoside 5'-triphosphate = RNA(n+1) + diphosphate. Its function is as follows. DNA-dependent RNA polymerase catalyzes the transcription of DNA into RNA using the four ribonucleoside triphosphates as substrates. The sequence is that of DNA-directed RNA polymerase subunit beta' from Shewanella denitrificans (strain OS217 / ATCC BAA-1090 / DSM 15013).